A 405-amino-acid chain; its full sequence is Multifunctional CCA protein (405 aa).

Residues glycine 8 and arginine 11 each coordinate ATP. CTP is bound by residues glycine 8 and arginine 11. Aspartate 21 and aspartate 23 together coordinate Mg(2+). Positions 91, 137, and 140 each coordinate ATP. The CTP site is built by arginine 91, arginine 137, and arginine 140. One can recognise an HD domain in the interval 225 to 326 (TGVHAMLVLD…LRLLRECDAL (102 aa)).

It belongs to the tRNA nucleotidyltransferase/poly(A) polymerase family. Bacterial CCA-adding enzyme type 1 subfamily. Monomer. Can also form homodimers and oligomers. Mg(2+) serves as cofactor. It depends on Ni(2+) as a cofactor.

The enzyme catalyses a tRNA precursor + 2 CTP + ATP = a tRNA with a 3' CCA end + 3 diphosphate. It catalyses the reaction a tRNA with a 3' CCA end + 2 CTP + ATP = a tRNA with a 3' CCACCA end + 3 diphosphate. Its function is as follows. Catalyzes the addition and repair of the essential 3'-terminal CCA sequence in tRNAs without using a nucleic acid template. Adds these three nucleotides in the order of C, C, and A to the tRNA nucleotide-73, using CTP and ATP as substrates and producing inorganic pyrophosphate. tRNA 3'-terminal CCA addition is required both for tRNA processing and repair. Also involved in tRNA surveillance by mediating tandem CCA addition to generate a CCACCA at the 3' terminus of unstable tRNAs. While stable tRNAs receive only 3'-terminal CCA, unstable tRNAs are marked with CCACCA and rapidly degraded. The sequence is that of Multifunctional CCA protein from Laribacter hongkongensis (strain HLHK9).